The primary structure comprises 469 residues: Glutamine synthetase (469 aa).

Residues 14–99 (NDVKFVDLRF…FCDILDPVSG (86 aa)) form the GS beta-grasp domain. The GS catalytic domain occupies 106–469 (PRGTAKKAEA…PVEFDMYYSV (364 aa)). Residues glutamate 131 and glutamate 133 each coordinate Mg(2+). Residue glutamate 209 coordinates ATP. Residues glutamate 214 and glutamate 221 each coordinate Mg(2+). Residues 265–266 (NG) and glycine 266 each bind L-glutamate. Residue histidine 270 coordinates Mg(2+). ATP-binding positions include 272–274 (HLS) and serine 274. L-glutamate is bound by residues arginine 322, glutamate 328, and arginine 340. Positions 340, 345, and 353 each coordinate ATP. Glutamate 358 contributes to the Mg(2+) binding site. An L-glutamate-binding site is contributed by arginine 360. An O-AMP-tyrosine modification is found at tyrosine 398.

It belongs to the glutamine synthetase family. As to quaternary structure, oligomer of 12 subunits arranged in the form of two hexameric ring. Mg(2+) serves as cofactor.

It is found in the cytoplasm. It catalyses the reaction L-glutamate + NH4(+) + ATP = L-glutamine + ADP + phosphate + H(+). With respect to regulation, the activity of this enzyme could be controlled by adenylation under conditions of abundant glutamine. Functionally, catalyzes the ATP-dependent biosynthesis of glutamine from glutamate and ammonia. This is Glutamine synthetase from Rhizobium meliloti (strain 1021) (Ensifer meliloti).